Here is a 701-residue protein sequence, read N- to C-terminus: ER-retained PMA1-suppressing protein 1 (701 aa).

Positions 1-27 (MKMNLKRLVVTFFSCITFLLKFTIAAA) are cleaved as a signal peptide. The Thioredoxin 1 domain occupies 28 to 142 (EPPEGFPEPL…LIAFARRESM (115 aa)). Cys-60 and Cys-63 are disulfide-bonded. Asn-85 carries an N-linked (GlcNAc...) asparagine glycan. Cys-200 and Cys-203 are disulfide-bonded. Residues Asn-264, Asn-299, and Asn-370 are each glycosylated (N-linked (GlcNAc...) asparagine). Residues 408-446 (PTFFMFKDGDPISYVFPGYSTTEMRNIDAIMDWVKKYSN) enclose the Thioredoxin 2 domain. A helical membrane pass occupies residues 646-666 (IIHGNGMPGYLIVIVLFIAIL).

It belongs to the protein disulfide isomerase family. In terms of assembly, interacts with mutated PMA1-D378N but not wild type PMA1. Interacts with EUG1, KAR2, MPD1 and PDI1.

The protein localises to the endoplasmic reticulum membrane. The catalysed reaction is Catalyzes the rearrangement of -S-S- bonds in proteins.. Acts as a membrane-bound chaperone in endoplasmic reticulum quality control. Probably facilitates presentation of substrate to membrane-bound components of the degradation machinery. In Saccharomyces cerevisiae (strain ATCC 204508 / S288c) (Baker's yeast), this protein is ER-retained PMA1-suppressing protein 1 (EPS1).